A 411-amino-acid chain; its full sequence is LL-diaminopimelate aminotransferase (411 aa).

Positions 15 and 42 each coordinate substrate. Pyridoxal 5'-phosphate-binding positions include Tyr-72, 108–109, Tyr-132, Asn-187, Tyr-218, and 246–248; these read AK and SFS. Positions 109, 132, and 187 each coordinate substrate. Lys-249 is subject to N6-(pyridoxal phosphate)lysine. 2 residues coordinate pyridoxal 5'-phosphate: Arg-257 and Asn-292. Residues Asn-292 and Arg-388 each contribute to the substrate site.

The protein belongs to the class-I pyridoxal-phosphate-dependent aminotransferase family. LL-diaminopimelate aminotransferase subfamily. As to quaternary structure, homodimer. The cofactor is pyridoxal 5'-phosphate.

The catalysed reaction is (2S,6S)-2,6-diaminopimelate + 2-oxoglutarate = (S)-2,3,4,5-tetrahydrodipicolinate + L-glutamate + H2O + H(+). It participates in amino-acid biosynthesis; L-lysine biosynthesis via DAP pathway; LL-2,6-diaminopimelate from (S)-tetrahydrodipicolinate (aminotransferase route): step 1/1. Functionally, involved in the synthesis of meso-diaminopimelate (m-DAP or DL-DAP), required for both lysine and peptidoglycan biosynthesis. Catalyzes the direct conversion of tetrahydrodipicolinate to LL-diaminopimelate. In Rippkaea orientalis (strain PCC 8801 / RF-1) (Cyanothece sp. (strain PCC 8801)), this protein is LL-diaminopimelate aminotransferase.